Consider the following 2193-residue polypeptide: Genome polyprotein (2193 aa).

Gly2 carries N-myristoyl glycine; by host lipidation. The Cytoplasmic segment spans residues 2 to 1503 (GAQVSTQKTG…HVSRAFICLQ (1502 aa)). The amphipathic alpha-helix stretch occupies residues 567–583 (ELQSDVREAVEGAIGRV). Active-site for protease 2A activity residues include His880 and Asp898. Zn(2+)-binding residues include Cys915 and Cys917. Residue Cys969 is the For protease 2A activity of the active site. Zn(2+) contacts are provided by Cys975 and His977. The tract at residues 1109 to 1181 (NNRWLKKFTE…EQSAPSQGDQ (73 aa)) is membrane-binding. The segment at 1109–1247 (NNRWLKKFTE…SPGAGKSVAT (139 aa)) is oligomerization. Positions 1130–1134 (AIKIQ) are RNA-binding. Residues 1213–1369 (EKKMSNYIQF…SMYSQNGKIN (157 aa)) enclose the SF3 helicase domain. Cys1377, Cys1389, and Cys1394 together coordinate Zn(2+). A C4-type; degenerate zinc finger spans residues 1377–1394 (CDEECCPVNFKKCCPLVC). Positions 1421–1428 (EYNHRHSV) are RNA-binding. Residues 1432 to 1437 (LEALFQ) are oligomerization. Residues 1504–1519 (ALTTFVSVAGIIYIIY) lie within the membrane without spanning it. Residues 1520–2193 (KLFAGFQGAY…TLRRKWLDSF (674 aa)) are Cytoplasmic-facing. Residue Tyr1529 is modified to O-(5'-phospho-RNA)-tyrosine. The Peptidase C3 domain maps to 1549–1727 (GPAFEFAVAM…FSAALLKHYF (179 aa)). Residues His1588, Glu1619, and Cys1695 each act as for protease 3C activity in the active site. The region spanning 1958–2074 (GHLIAFDYSG…SYPWPIDASL (117 aa)) is the RdRp catalytic domain. 2 residues coordinate Mg(2+): Asp1964 and Asp2060.

This sequence belongs to the picornaviruses polyprotein family. Interacts with capsid protein VP1 and capsid protein VP3 to form heterotrimeric protomers. In terms of assembly, interacts with capsid protein VP0, and capsid protein VP3 to form heterotrimeric protomers. Five protomers subsequently associate to form pentamers which serve as building blocks for the capsid. Interacts with capsid protein VP2, capsid protein VP3 and capsid protein VP4 following cleavage of capsid protein VP0. As to quaternary structure, interacts with capsid protein VP1 and capsid protein VP3 in the mature capsid. Interacts with capsid protein VP0 and capsid protein VP1 to form heterotrimeric protomers. Five protomers subsequently associate to form pentamers which serve as building blocks for the capsid. Interacts with capsid protein VP4 in the mature capsid. Interacts with protein 2C; this interaction may be important for virion morphogenesis. In terms of assembly, interacts with capsid protein VP1 and capsid protein VP3. As to quaternary structure, homodimer. Homohexamer; forms a hexameric ring structure with 6-fold symmetry characteristic of AAA+ ATPases. Interacts (via N-terminus) with host RTN3 (via reticulon domain); this interaction is important for viral replication. Interacts with capsid protein VP3; this interaction may be important for virion morphogenesis. In terms of assembly, interacts with protein 3CD. As to quaternary structure, homodimer. Interacts with host GBF1. Interacts (via GOLD domain) with host ACBD3 (via GOLD domain); this interaction allows the formation of a viral protein 3A/ACBD3 heterotetramer with a 2:2 stoichiometry, which will stimulate the recruitment of host PI4KB in order to synthesize PI4P at the viral RNA replication sites. Interacts with RNA-directed RNA polymerase. In terms of assembly, interacts with protein 3AB and with RNA-directed RNA polymerase. As to quaternary structure, interacts with Viral protein genome-linked and with protein 3CD. The cofactor is Mg(2+). Post-translationally, specific enzymatic cleavages in vivo by the viral proteases yield processing intermediates and the mature proteins. Myristoylation is required for the formation of pentamers during virus assembly. Further assembly of 12 pentamers and a molecule of genomic RNA generates the provirion. In terms of processing, during virion maturation, immature virions are rendered infectious following cleavage of VP0 into VP4 and VP2. This maturation seems to be an autocatalytic event triggered by the presence of RNA in the capsid and it is followed by a conformational change infectious virion. Post-translationally, myristoylation is required during RNA encapsidation and formation of the mature virus particle. VPg is uridylylated by the polymerase into VPg-pUpU. This acts as a nucleotide-peptide primer for the genomic RNA replication.

The protein localises to the virion. The protein resides in the host cytoplasm. It localises to the host cytoplasmic vesicle membrane. It is found in the host nucleus. It carries out the reaction a ribonucleoside 5'-triphosphate + H2O = a ribonucleoside 5'-diphosphate + phosphate + H(+). The catalysed reaction is Selective cleavage of Tyr-|-Gly bond in the picornavirus polyprotein.. The enzyme catalyses RNA(n) + a ribonucleoside 5'-triphosphate = RNA(n+1) + diphosphate. It catalyses the reaction Selective cleavage of Gln-|-Gly bond in the poliovirus polyprotein. In other picornavirus reactions Glu may be substituted for Gln, and Ser or Thr for Gly.. With respect to regulation, replication or transcription is subject to high level of random mutations by the nucleotide analog ribavirin. Forms an icosahedral capsid of pseudo T=3 symmetry with capsid proteins VP2 and VP3. The capsid is 300 Angstroms in diameter, composed of 60 copies of each capsid protein and enclosing the viral positive strand RNA genome. Capsid protein VP1 mainly forms the vertices of the capsid. Capsid protein VP1 interacts with host cell receptor to provide virion attachment to target host cells. This attachment induces virion internalization. Tyrosine kinases are probably involved in the entry process. After binding to its receptor, the capsid undergoes conformational changes. Capsid protein VP1 N-terminus (that contains an amphipathic alpha-helix) and capsid protein VP4 are externalized. Together, they shape a pore in the host membrane through which viral genome is translocated to host cell cytoplasm. Its function is as follows. Forms an icosahedral capsid of pseudo T=3 symmetry with capsid proteins VP2 and VP3. The capsid is 300 Angstroms in diameter, composed of 60 copies of each capsid protein and enclosing the viral positive strand RNA genome. Functionally, lies on the inner surface of the capsid shell. After binding to the host receptor, the capsid undergoes conformational changes. Capsid protein VP4 is released, Capsid protein VP1 N-terminus is externalized, and together, they shape a pore in the host membrane through which the viral genome is translocated into the host cell cytoplasm. In terms of biological role, component of immature procapsids, which is cleaved into capsid proteins VP4 and VP2 after maturation. Allows the capsid to remain inactive before the maturation step. Cysteine protease that cleaves viral polyprotein and specific host proteins. It is responsible for the autocatalytic cleavage between the P1 and P2 regions, which is the first cleavage occurring in the polyprotein. Also cleaves the host translation initiation factor EIF4G1, in order to shut down the capped cellular mRNA translation. Inhibits the host nucleus-cytoplasm protein and RNA trafficking by cleaving host members of the nuclear pores. Counteracts stress granule formation probably by antagonizing its assembly or promoting its dissassembly. Its function is as follows. Plays an essential role in the virus replication cycle by acting as a viroporin. Creates a pore in the host endoplasmic reticulum and as a consequence releases Ca2+ in the cytoplasm of infected cell. In turn, high levels of cytoplasmic calcium may trigger membrane trafficking and transport of viral ER-associated proteins to viroplasms, sites of viral genome replication. Functionally, induces and associates with structural rearrangements of intracellular membranes. Displays RNA-binding, nucleotide binding and NTPase activities. May play a role in virion morphogenesis and viral RNA encapsidation by interacting with the capsid protein VP3. In terms of biological role, localizes the viral replication complex to the surface of membranous vesicles. Together with protein 3CD binds the Cis-Active RNA Element (CRE) which is involved in RNA synthesis initiation. Acts as a cofactor to stimulate the activity of 3D polymerase, maybe through a nucleid acid chaperone activity. Localizes the viral replication complex to the surface of membranous vesicles. It inhibits host cell endoplasmic reticulum-to-Golgi apparatus transport and causes the disassembly of the Golgi complex, possibly through GBF1 interaction. This would result in depletion of MHC, trail receptors and IFN receptors at the host cell surface. Plays an essential role in viral RNA replication by recruiting ACBD3 and PI4KB at the viral replication sites, thereby allowing the formation of the rearranged membranous structures where viral replication takes place. Its function is as follows. Acts as a primer for viral RNA replication and remains covalently bound to viral genomic RNA. VPg is uridylylated prior to priming replication into VPg-pUpU. The oriI viral genomic sequence may act as a template for this. The VPg-pUpU is then used as primer on the genomic RNA poly(A) by the RNA-dependent RNA polymerase to replicate the viral genome. During genome replication, the VPg-RNA linkage is removed by the host TDP2, thereby accelerating replication. During the late stage of the replication cycle, host TDP2 is excluded from sites of viral RNA synthesis and encapsidation, allowing for the generation of progeny virions. Functionally, involved in the viral replication complex and viral polypeptide maturation. It exhibits protease activity with a specificity and catalytic efficiency that is different from protease 3C. Protein 3CD lacks polymerase activity. Protein 3CD binds to the 5'UTR of the viral genome. In terms of biological role, replicates the viral genomic RNA on the surface of intracellular membranes. May form linear arrays of subunits that propagate along a strong head-to-tail interaction called interface-I. Covalently attaches UMP to a tyrosine of VPg, which is used to prime RNA synthesis. The positive stranded RNA genome is first replicated at virus induced membranous vesicles, creating a dsRNA genomic replication form. This dsRNA is then used as template to synthesize positive stranded RNA genomes. ss(+)RNA genomes are either translated, replicated or encapsidated. Major viral protease that mediates proteolytic processing of the polyprotein. Cleaves host EIF5B, contributing to host translation shutoff. Also cleaves host PABPC1, contributing to host translation shutoff. Cleaves host NLRP1, triggers host N-glycine-mediated degradation of the autoinhibitory NLRP1 N-terminal fragment. This Echovirus 9 (strain Hill) protein is Genome polyprotein.